The following is a 529-amino-acid chain: Zinc finger protein 490 (529 aa).

The tract at residues 1-53 (MRRNSSLSFQMERPLEEQVQSKWSSSQGRTGTGGSDVLQMQNSEHHGQSIKTQ) is disordered. The 76-residue stretch at 57-132 (ISLEDVAVNF…ALCENKEDCP (76 aa)) folds into the KRAB domain. C2H2-type zinc fingers lie at residues 156-178 (CDCS…MRSH), 194-216 (HKCK…ERIH), 222-244 (YECK…IRIH), 250-272 (YECK…EKNH), 278-300 (YKCK…ERTH), 306-328 (YECK…EKTH), 334-356 (FVCR…VKTH), 362-384 (YTCK…ERTH), 390-412 (YECK…ERVH), 418-440 (YECK…ERTH), 446-468 (YECK…ERSH), 474-496 (CECK…KRIH), and 502-524 (FQCR…ERTH).

This sequence belongs to the krueppel C2H2-type zinc-finger protein family.

The protein resides in the nucleus. In terms of biological role, may be involved in transcriptional regulation. In Homo sapiens (Human), this protein is Zinc finger protein 490 (ZNF490).